The chain runs to 637 residues: Poly [ADP-ribose] polymerase 2 (637 aa).

A DNA-binding region spans residues 1-140; the sequence is MANKLKVDEL…KKEEKIVTAT (140 aa). One can recognise an SAP 1 domain in the interval 2–36; the sequence is ANKLKVDELRLKLAERGLSTTGVKAVLVERLEEAI. Residues 35–46 are compositionally biased toward basic and acidic residues; the sequence is AIAEDTKKEESK. The interval 35–56 is disordered; it reads AIAEDTKKEESKSKRKRNSSND. A Nuclear localization signal motif is present at residues 41-62; it reads KKEESKSKRKRNSSNDTYESNK. In terms of domain architecture, SAP 2 spans 69 to 103; that stretch reads FRGMIVKELREEAIKRGLDTTGTKKDLLERLCNDA. Over residues 106–117 the composition is skewed to polar residues; the sequence is VSNAPVKSSNGT. Residues 106–134 are disordered; sequence VSNAPVKSSNGTDEAEDDNNGFEEEKKEE. The span at 118–127 shows a compositional bias: acidic residues; the sequence is DEAEDDNNGF. A WGR domain is found at 158 to 255; it reads QYHVLQRGDD…KEFIPHPKSY (98 aa). Residues 286-404 form the PARP alpha-helical domain; it reads QSKLDTRVAK…EIELATKLLS (119 aa). Residues 412-637 form the PARP catalytic domain; it reads DPLYYHYQQL…VIQVKFNYKH (226 aa).

This sequence belongs to the ARTD/PARP family.

The protein localises to the nucleus. It carries out the reaction NAD(+) + (ADP-D-ribosyl)n-acceptor = nicotinamide + (ADP-D-ribosyl)n+1-acceptor + H(+).. It catalyses the reaction L-aspartyl-[protein] + NAD(+) = 4-O-(ADP-D-ribosyl)-L-aspartyl-[protein] + nicotinamide. The catalysed reaction is L-glutamyl-[protein] + NAD(+) = 5-O-(ADP-D-ribosyl)-L-glutamyl-[protein] + nicotinamide. Involved in the base excision repair (BER) pathway, by catalyzing the poly(ADP-ribosyl)ation of a limited number of acceptor proteins involved in chromatin architecture and in DNA metabolism. This modification follows DNA damages and appears as an obligatory step in a detection/signaling pathway leading to the reparation of DNA strand breaks. The polypeptide is Poly [ADP-ribose] polymerase 2 (PARP2) (Arabidopsis thaliana (Mouse-ear cress)).